The sequence spans 272 residues: Phosphate import ATP-binding protein PstB (272 aa).

Residues 26–267 (IVVKNWNLYY…PQVKRTEDYI (242 aa)) form the ABC transporter domain. 58–65 (GPSGCGKS) serves as a coordination point for ATP.

It belongs to the ABC transporter superfamily. Phosphate importer (TC 3.A.1.7) family. As to quaternary structure, the complex is composed of two ATP-binding proteins (PstB), two transmembrane proteins (PstC and PstA) and a solute-binding protein (PstS).

It is found in the cell inner membrane. The enzyme catalyses phosphate(out) + ATP + H2O = ADP + 2 phosphate(in) + H(+). Part of the ABC transporter complex PstSACB involved in phosphate import. Responsible for energy coupling to the transport system. This chain is Phosphate import ATP-binding protein PstB, found in Hydrogenovibrio crunogenus (strain DSM 25203 / XCL-2) (Thiomicrospira crunogena).